We begin with the raw amino-acid sequence, 479 residues long: Cardiolipin synthase A (479 aa).

The next 2 membrane-spanning stretches (helical) occupy residues 8–28 and 38–58; these read FFGYVLGFIHLLGTGAAIHAL and IAWAMPLLFIPYFTLLPYLVF. PLD phosphodiesterase domains follow at residues 218–245 and 392–419; these read INFRNHRKIVVVDGLKGYIGGHNVGDEY and EPGFLHQKVVLVDNEITAIGSANLDNRS. Catalysis depends on residues histidine 223, lysine 225, aspartate 230, histidine 397, lysine 399, and aspartate 404.

Belongs to the phospholipase D family. Cardiolipin synthase subfamily. ClsA sub-subfamily.

It is found in the cell inner membrane. The catalysed reaction is 2 a 1,2-diacyl-sn-glycero-3-phospho-(1'-sn-glycerol) = a cardiolipin + glycerol. Its function is as follows. Catalyzes the reversible phosphatidyl group transfer from one phosphatidylglycerol molecule to another to form cardiolipin (CL) (diphosphatidylglycerol) and glycerol. The polypeptide is Cardiolipin synthase A (Pseudomonas syringae pv. syringae (strain B728a)).